Reading from the N-terminus, the 159-residue chain is Ribosomal RNA large subunit methyltransferase H (159 aa).

Residues L76, G108, and 127-132 (FGQLTL) each bind S-adenosyl-L-methionine.

The protein belongs to the RNA methyltransferase RlmH family. Homodimer.

The protein localises to the cytoplasm. It carries out the reaction pseudouridine(1915) in 23S rRNA + S-adenosyl-L-methionine = N(3)-methylpseudouridine(1915) in 23S rRNA + S-adenosyl-L-homocysteine + H(+). In terms of biological role, specifically methylates the pseudouridine at position 1915 (m3Psi1915) in 23S rRNA. The protein is Ribosomal RNA large subunit methyltransferase H of Streptococcus suis (strain 05ZYH33).